Reading from the N-terminus, the 624-residue chain is Na(+)/H(+) antiporter NhaA (624 aa).

The interval 1–164 (MNPELPPNHL…TFFINGRRYD (164 aa)) is unknown. A na(+)/H(+) antiporter NhaA region spans residues 165–624 (GPWDVRSLSE…NAQAEEEKNP (460 aa)). A run of 11 helical transmembrane segments spans residues 199-219 (GIML…ALGP), 240-260 (LSLR…VVGL), 279-299 (LPIA…LILV), 319-339 (GWGV…AMMG), 348-368 (VFLT…VAIF), 371-391 (GELH…LALL), 407-427 (IVLW…GIIL), 497-517 (FLVL…TSVF), 521-541 (IPLM…GFIT), 565-585 (GAGA…SQAF), and 596-616 (IAIF…LWNA).

It belongs to the NhaA Na(+)/H(+) (TC 2.A.33) antiporter family.

It is found in the cell inner membrane. The enzyme catalyses Na(+)(in) + 2 H(+)(out) = Na(+)(out) + 2 H(+)(in). Its function is as follows. Na(+)/H(+) antiporter that extrudes sodium in exchange for external protons. This Nitrosospira multiformis (strain ATCC 25196 / NCIMB 11849 / C 71) protein is Na(+)/H(+) antiporter NhaA.